Reading from the N-terminus, the 135-residue chain is Ribosome-binding factor A (135 aa).

This sequence belongs to the RbfA family. Monomer. Binds 30S ribosomal subunits, but not 50S ribosomal subunits or 70S ribosomes.

The protein resides in the cytoplasm. One of several proteins that assist in the late maturation steps of the functional core of the 30S ribosomal subunit. Associates with free 30S ribosomal subunits (but not with 30S subunits that are part of 70S ribosomes or polysomes). Required for efficient processing of 16S rRNA. May interact with the 5'-terminal helix region of 16S rRNA. The chain is Ribosome-binding factor A from Bartonella quintana (strain Toulouse) (Rochalimaea quintana).